The following is a 263-amino-acid chain: Oxidoreductase UcpA (263 aa).

10–32 (LITGASQGIGEGIARVFARHGAN) provides a ligand contact to NAD(+). A substrate-binding site is contributed by Ser-141. Tyr-155 functions as the Proton acceptor in the catalytic mechanism.

The protein belongs to the short-chain dehydrogenases/reductases (SDR) family.

The protein is Oxidoreductase UcpA (ucpA) of Salmonella typhi.